A 257-amino-acid polypeptide reads, in one-letter code: Golgi SNAP receptor complex member 1-2 (257 aa).

The Cytoplasmic portion of the chain corresponds to 1-235 (MTESSLDLQE…GSIKRKRSRD (235 aa)). Asn51 is subject to Phosphoserine. A coiled-coil region spans residues 113 to 147 (TQKLARHRDILHEYTQEFRRIKGNINSLREHAELL). Residues 236–256 (TLILSAVIAACTLFLIIYWLS) form a helical; Anchor for type IV membrane protein membrane-spanning segment. A topological domain (vesicular) is located at residue Lys257.

This sequence belongs to the GOSR1 family. Component of several multiprotein Golgi SNARE complexes.

Its subcellular location is the golgi apparatus membrane. It localises to the endoplasmic reticulum membrane. Functionally, involved in transport from the ER to the Golgi apparatus as well as in intra-Golgi transport. It belongs to a super-family of proteins called t-SNAREs or soluble NSF (N-ethylmaleimide-sensitive factor) attachment protein receptor. The sequence is that of Golgi SNAP receptor complex member 1-2 (GOS12) from Arabidopsis thaliana (Mouse-ear cress).